The chain runs to 440 residues: Chromosome partition protein MukF (440 aa).

Residues 208-236 (LSETSGTLRELQDTLEAAGDKLQANLLRI) form a leucine-zipper region.

It belongs to the MukF family. As to quaternary structure, interacts, and probably forms a ternary complex, with MukE and MukB via its C-terminal region. The complex formation is stimulated by calcium or magnesium. It is required for an interaction between MukE and MukB.

It localises to the cytoplasm. The protein resides in the nucleoid. Involved in chromosome condensation, segregation and cell cycle progression. May participate in facilitating chromosome segregation by condensation DNA from both sides of a centrally located replisome during cell division. Not required for mini-F plasmid partitioning. Probably acts via its interaction with MukB and MukE. Overexpression results in anucleate cells. It has a calcium binding activity. The chain is Chromosome partition protein MukF from Escherichia coli O9:H4 (strain HS).